A 672-amino-acid chain; its full sequence is Transmembrane 9 superfamily member 2 (672 aa).

The first 18 residues, Met-1 to Gly-18, serve as a signal peptide directing secretion. Over Phe-19–Gln-307 the chain is Extracellular. The chain crosses the membrane as a helical span at residues Ile-308–Met-328. The Cytoplasmic portion of the chain corresponds to His-329 to Gln-383. A helical transmembrane segment spans residues Leu-384–Ser-404. Topologically, residues Arg-405–Thr-410 are extracellular. A helical transmembrane segment spans residues Val-411 to Tyr-431. The Cytoplasmic portion of the chain corresponds to Lys-432 to Pro-447. Residues Ile-448 to Ala-468 form a helical membrane-spanning segment. At His-469–Leu-479 the chain is on the extracellular side. The helical transmembrane segment at Phe-480–Val-500 threads the bilayer. Topologically, residues Ala-501 to Gln-532 are cytoplasmic. A helical membrane pass occupies residues Ala-533–Tyr-553. Topologically, residues Ser-554–Phe-565 are extracellular. The chain crosses the membrane as a helical span at residues Gly-566–Ile-586. The Cytoplasmic segment spans residues Thr-587 to Arg-601. A helical membrane pass occupies residues Ser-602 to Thr-622. Residues Lys-623–Gly-628 lie on the Extracellular side of the membrane. The chain crosses the membrane as a helical span at residues Val-629–Val-649. At Thr-650–Glu-672 the chain is on the cytoplasmic side.

The protein belongs to the nonaspanin (TM9SF) (TC 9.A.2) family.

The protein resides in the vacuole membrane. In terms of biological role, with EMP70 and TMN3, plays a critical role in the late stages of a nutrient-controlled pathway notably regulating FLO11 gene expression. Acts downstream of RAS2 and TOR. Essential for cell adhesion and filamentous growth. May play a role as effector of cellular copper homeostasis. The polypeptide is Transmembrane 9 superfamily member 2 (TMN2) (Saccharomyces cerevisiae (strain ATCC 204508 / S288c) (Baker's yeast)).